Consider the following 250-residue polypeptide: 2,3-bisphosphoglycerate-dependent phosphoglycerate mutase (250 aa).

Substrate is bound by residues 10-17 (RHGESEWN), 23-24 (TG), Arg62, 89-92 (ERHY), Lys100, 116-117 (RR), and 185-186 (GN). The Tele-phosphohistidine intermediate role is filled by His11. Glu89 acts as the Proton donor/acceptor in catalysis.

This sequence belongs to the phosphoglycerate mutase family. BPG-dependent PGAM subfamily. In terms of assembly, homodimer.

The enzyme catalyses (2R)-2-phosphoglycerate = (2R)-3-phosphoglycerate. It participates in carbohydrate degradation; glycolysis; pyruvate from D-glyceraldehyde 3-phosphate: step 3/5. In terms of biological role, catalyzes the interconversion of 2-phosphoglycerate and 3-phosphoglycerate. The sequence is that of 2,3-bisphosphoglycerate-dependent phosphoglycerate mutase from Edwardsiella ictaluri (strain 93-146).